The following is a 906-amino-acid chain: MTAVHTGNINFKWDPKSLEIRTLAVERLLEPLVTQVTTLVNTNSKGPSNKKRGRSKKAHVLAASVEQATENFLEKGDKIAKESQFLKEELVAAVEDVRKQCDLMKSAAGEFADDPCSSVKRGNMVRAARALLSAVTRLLILADMADVYKLLVQLKLVEDGILKLRNAGTEQDLGIQYKALKPEVDKLNIMAAKRQQELKDVGHRDQMAAARGILQKNVPILYTASQACLQHPDVAAYKANRDLIYKQLQQAVTGISNAAQATASDDASQHPGAGGGELAYALNNFDKQIIVDPLSFSEERFRPSLEERLESIISGAALMADSSCTRDDRRERIVAECNAVRQALQDLLSEYMGNAGRKERSDALNSAIDKMTKKTRDLRRQLRKAVMDHVSDSFLETNVPLLVLVEAAKNGNEKEVKEYAQVFREHANKLIEVANLACSISNNEEGVKLVRMSASQLEALCPQVINAALALAAKPQSKLAQENMDLFKEQWEKQVRVLTDAVDDITSIDDFLAVSENHILEDVNKCVIALQEKDVDGLDRTAGAIRGRAARVIHVVTSEMDNYEPGVYTEKVLEATKLLSNTVMPRFTEQVEAAVEALSSDPAQPMDENEFIDASRLVYDGIRDIRKAVLMIRTPEELDDSDFETEDFDVRSRTSVQTEDDQLIAGQSARAIMAQLPQEQKAKIAEQVASFQEEKSKLDAEVSKWDDSGNDIIVLAKQMCMIMMEMTDFTRGKGPLKNTSDVISAAKKIAEAGSRMDKLGRTIADHCPDSACKQDLLAYLQRIALYCHQLNICSKVKAEVQNLGGELVVSGVDSAMSLIQAAKNLMNAVVQTVKASYVASTKYQKSQGMASLNLPAVSWKMKAPEKKPLVKREKQDETQTKIKRASQKKHVNPVQALSEFKAMDSI.

At threonine 2 the chain carries N-acetylthreonine. The involved in homodimerization stretch occupies residues 2-228 (TAVHTGNINF…PILYTASQAC (227 aa)). A Glycyl lysine isopeptide (Lys-Gly) (interchain with G-Cter in SUMO2) cross-link involves residue lysine 57. The interval 97-148 (VRKQCDLMKSAAGEFADDPCSSVKRGNMVRAARALLSAVTRLLILADMADVY) is interaction with JUP and CTNNB1. Phosphoserine is present on residues serine 264, serine 268, serine 295, and serine 297. Residues 325-394 (TRDDRRERIV…AVMDHVSDSF (70 aa)) are interaction with alpha-actinin. Residue threonine 634 is modified to Phosphothreonine. Position 641 is a phosphoserine (serine 641). The residue at position 645 (threonine 645) is a Phosphothreonine. A phosphoserine mark is found at serine 652 and serine 655. Threonine 658 bears the Phosphothreonine mark. Residue lysine 797 forms a Glycyl lysine isopeptide (Lys-Gly) (interchain with G-Cter in SUMO2) linkage. Serine 851 is modified (phosphoserine). Basic and acidic residues predominate over residues 864–880 (PEKKPLVKREKQDETQT). A disordered region spans residues 864 to 894 (PEKKPLVKREKQDETQTKIKRASQKKHVNPV). Over residues 881-891 (KIKRASQKKHV) the composition is skewed to basic residues.

It belongs to the vinculin/alpha-catenin family. In terms of assembly, monomer and homodimer; the monomer preferentially binds to CTNNB1 and the homodimer to actin. Component of an cadherin:catenin adhesion complex composed of at least of CDH26, beta-catenin/CTNNB1, alpha-catenin/CTNNA1 and p120 catenin/CTNND1. Possible component of an E-cadherin/ catenin adhesion complex together with E-cadherin/CDH1 and beta-catenin/CTNNB1 or gamma-catenin/JUP; the complex is located to adherens junctions. The stable association of CTNNA1 is controversial as CTNNA1 was shown not to bind to F-actin when assembled in the complex. Alternatively, the CTNNA1-containing complex may be linked to F-actin by other proteins such as LIMA1. Binds AFDN and F-actin. Interacts with ARHGAP21. Interacts with AJUBA. Interacts with LIMA1. Interacts with vinculin/VCL. Interacts with TJP2/ZO2 (via N-terminus). Interacts with TJP1/ZO1 (via N-terminus). Post-translationally, sumoylated. In terms of processing, phosphorylation seems to contribute to the strength of cell-cell adhesion rather than to the basic capacity for cell-cell adhesion.

Its subcellular location is the cytoplasm. The protein localises to the cytoskeleton. It localises to the cell junction. The protein resides in the adherens junction. It is found in the cell membrane. Its subcellular location is the nucleus. Its function is as follows. Associates with the cytoplasmic domain of a variety of cadherins. The association of catenins to cadherins produces a complex which is linked to the actin filament network, and which seems to be of primary importance for cadherins cell-adhesion properties. Can associate with both E- and N-cadherins. Originally believed to be a stable component of E-cadherin/catenin adhesion complexes and to mediate the linkage of cadherins to the actin cytoskeleton at adherens junctions. In contrast, cortical actin was found to be much more dynamic than E-cadherin/catenin complexes and CTNNA1 was shown not to bind to F-actin when assembled in the complex suggesting a different linkage between actin and adherens junctions components. The homodimeric form may regulate actin filament assembly and inhibit actin branching by competing with the Arp2/3 complex for binding to actin filaments. Involved in the regulation of WWTR1/TAZ, YAP1 and TGFB1-dependent SMAD2 and SMAD3 nuclear accumulation. May play a crucial role in cell differentiation. This Bos taurus (Bovine) protein is Catenin alpha-1.